A 201-amino-acid polypeptide reads, in one-letter code: NAD(P)H dehydrogenase (quinone) (201 aa).

The Flavodoxin-like domain occupies 4 to 192 (VLVLYYSSYG…TIARFQGQHI (189 aa)). Residues 10–15 (SSYGHV) and 80–82 (TRF) contribute to the FMN site. Tyr12 is an NAD(+) binding site. Position 100 (Trp100) interacts with substrate. Residues 115 to 121 (STASQHG) and His136 contribute to the FMN site.

The protein belongs to the WrbA family. The cofactor is FMN.

The enzyme catalyses a quinone + NADH + H(+) = a quinol + NAD(+). It carries out the reaction a quinone + NADPH + H(+) = a quinol + NADP(+). The chain is NAD(P)H dehydrogenase (quinone) from Chromohalobacter salexigens (strain ATCC BAA-138 / DSM 3043 / CIP 106854 / NCIMB 13768 / 1H11).